A 199-amino-acid chain; its full sequence is NAD(P)H dehydrogenase (quinone) (199 aa).

The 187-residue stretch at 4–190 (VLVLYYSAYG…AGARYQGRRV (187 aa)) folds into the Flavodoxin-like domain. FMN-binding positions include 10 to 15 (SAYGHI) and 78 to 80 (TRF). Tyr-12 lines the NAD(+) pocket. Trp-98 contributes to the substrate binding site. Residues 113 to 119 (STATQHG) and His-134 each bind FMN.

Belongs to the WrbA family. It depends on FMN as a cofactor.

The enzyme catalyses a quinone + NADH + H(+) = a quinol + NAD(+). The catalysed reaction is a quinone + NADPH + H(+) = a quinol + NADP(+). The chain is NAD(P)H dehydrogenase (quinone) from Methylocella silvestris (strain DSM 15510 / CIP 108128 / LMG 27833 / NCIMB 13906 / BL2).